The sequence spans 937 residues: Isoleucine--tRNA ligase (937 aa).

The 'HIGH' region motif lies at 58 to 68 (PYANGSIHIGH). L-isoleucyl-5'-AMP is bound at residue E561. The 'KMSKS' region signature appears at 602–606 (KMSKS). An ATP-binding site is contributed by K605. 4 residues coordinate Zn(2+): C900, C903, C920, and C923.

Belongs to the class-I aminoacyl-tRNA synthetase family. IleS type 1 subfamily. As to quaternary structure, monomer. Zn(2+) serves as cofactor.

The protein localises to the cytoplasm. It carries out the reaction tRNA(Ile) + L-isoleucine + ATP = L-isoleucyl-tRNA(Ile) + AMP + diphosphate. Catalyzes the attachment of isoleucine to tRNA(Ile). As IleRS can inadvertently accommodate and process structurally similar amino acids such as valine, to avoid such errors it has two additional distinct tRNA(Ile)-dependent editing activities. One activity is designated as 'pretransfer' editing and involves the hydrolysis of activated Val-AMP. The other activity is designated 'posttransfer' editing and involves deacylation of mischarged Val-tRNA(Ile). The protein is Isoleucine--tRNA ligase of Photorhabdus laumondii subsp. laumondii (strain DSM 15139 / CIP 105565 / TT01) (Photorhabdus luminescens subsp. laumondii).